Reading from the N-terminus, the 521-residue chain is Protein NRT1/ PTR FAMILY 4.2 (521 aa).

12 consecutive transmembrane segments (helical) span residues 30–50 (IVCVVVMMENIVFIANGFNFV), 65–85 (ANMVTNFMGTSFLLTLFGGFI), 89–109 (FVTHFTTFIVFCCIELMGLIL), 133–153 (AILFTGLYAMAIGTGGLKASL), 172–192 (FFDWLYFSICSGCLLAVTVVL), 204–224 (FNISVGILATALCIFTVGLPF), 297–317 (FLGLLPIFGSTIVMSCCVAQL), 338–358 (IPVPSLTAIPLIFMLLSIPLY), 381–401 (IGLGLALSSVSMAVSAIVEAK), 413–433 (ISVLWLVFQYLMLSVSDMLTL), 451–471 (ISTALGWCSTALGFFLSTTLV), and 498–518 (LFYVLLCVLNTLNLLNYIFWA).

This sequence belongs to the major facilitator superfamily. Proton-dependent oligopeptide transporter (POT/PTR) (TC 2.A.17) family. As to expression, expressed in siliques.

The protein localises to the membrane. Involved in abscisic acid transport. This is Protein NRT1/ PTR FAMILY 4.2 (NPF4.2) from Arabidopsis thaliana (Mouse-ear cress).